Here is a 481-residue protein sequence, read N- to C-terminus: UDP-glycosyltransferase 88F4 (481 aa).

UDP-alpha-D-glucose is bound by residues Ser288, 357–358, 375–383, and 397–400; these read WA, HCGWNSVLE, and YAEQ.

The protein belongs to the UDP-glycosyltransferase family.

In terms of biological role, glycosyltransferase that may possess chalcone and dihydrochalcone 2'-O-glucosyltransferase activity. The protein is UDP-glycosyltransferase 88F4 of Malus domestica (Apple).